The following is a 255-amino-acid chain: F-box/SPRY domain-containing protein 1 (255 aa).

One can recognise an F-box domain in the interval 3–51 (DPVAALCNYNVLEVIFSYLELDDLSHCSQVCKSWYHFLNDENSDVWRWH). In terms of domain architecture, B30.2/SPRY spans 61–253 (LKSDLLSSVP…VSMVYLGTPL (193 aa)).

It belongs to the FBXO45/Fsn family. In terms of assembly, component of an E3 ubiquitin ligase complex composed of hiw and Fsn.

The protein resides in the synapse. It functions in the pathway protein modification; protein ubiquitination. In terms of biological role, required in the presynaptic motoneuron to down-regulate the levels of wnd and restrain synaptic terminal growth at the neuromuscular junction (NMJ). The protein is F-box/SPRY domain-containing protein 1 of Drosophila sechellia (Fruit fly).